The following is a 380-amino-acid chain: O-phospho-L-seryl-tRNA:Cys-tRNA synthase (380 aa).

Pyridoxal 5'-phosphate contacts are provided by residues 86 to 87 (AR), Asn-192, and 215 to 217 (SGH). Lys-218 is subject to N6-(pyridoxal phosphate)lysine.

The protein belongs to the SepCysS family. As to quaternary structure, homodimer. Interacts with SepRS. It depends on pyridoxal 5'-phosphate as a cofactor.

It catalyses the reaction O-phospho-L-seryl-tRNA(Cys) + hydrogen sulfide + H(+) = L-cysteinyl-tRNA(Cys) + phosphate. In terms of biological role, converts O-phospho-L-seryl-tRNA(Cys) (Sep-tRNA(Cys)) to L-cysteinyl-tRNA(Cys) (Cys-tRNA(Cys)). This is O-phospho-L-seryl-tRNA:Cys-tRNA synthase from Methanococcus maripaludis (strain DSM 14266 / JCM 13030 / NBRC 101832 / S2 / LL).